The chain runs to 443 residues: Exodeoxyribonuclease 7 large subunit (443 aa).

It belongs to the XseA family. As to quaternary structure, heterooligomer composed of large and small subunits.

Its subcellular location is the cytoplasm. The enzyme catalyses Exonucleolytic cleavage in either 5'- to 3'- or 3'- to 5'-direction to yield nucleoside 5'-phosphates.. In terms of biological role, bidirectionally degrades single-stranded DNA into large acid-insoluble oligonucleotides, which are then degraded further into small acid-soluble oligonucleotides. This is Exodeoxyribonuclease 7 large subunit from Vibrio parahaemolyticus serotype O3:K6 (strain RIMD 2210633).